A 176-amino-acid polypeptide reads, in one-letter code: Negative modulator of initiation of replication (176 aa).

It belongs to the SeqA family. Homodimer. Polymerizes to form helical filaments.

It is found in the cytoplasm. Its function is as follows. Negative regulator of replication initiation, which contributes to regulation of DNA replication and ensures that replication initiation occurs exactly once per chromosome per cell cycle. Binds to pairs of hemimethylated GATC sequences in the oriC region, thus preventing assembly of replication proteins and re-initiation at newly replicated origins. Repression is relieved when the region becomes fully methylated. The sequence is that of Negative modulator of initiation of replication from Hamiltonella defensa subsp. Acyrthosiphon pisum (strain 5AT).